The chain runs to 196 residues: Hypoxanthine/guanine phosphoribosyltransferase (196 aa).

It belongs to the purine/pyrimidine phosphoribosyltransferase family. Archaeal HPRT subfamily. In terms of assembly, homodimer.

It is found in the cytoplasm. It catalyses the reaction IMP + diphosphate = hypoxanthine + 5-phospho-alpha-D-ribose 1-diphosphate. It carries out the reaction GMP + diphosphate = guanine + 5-phospho-alpha-D-ribose 1-diphosphate. Its pathway is purine metabolism; IMP biosynthesis via salvage pathway; IMP from hypoxanthine: step 1/1. Functionally, catalyzes a salvage reaction resulting in the formation of IMP that is energically less costly than de novo synthesis. This chain is Hypoxanthine/guanine phosphoribosyltransferase, found in Methanocaldococcus sp. (strain FS406-22).